Consider the following 516-residue polypeptide: 2-isopropylmalate synthase (516 aa).

One can recognise a Pyruvate carboxyltransferase domain in the interval 5–267; the sequence is VIIFDTTLRD…STNIVHKEIY (263 aa). The Mn(2+) site is built by D14, H202, H204, and N238. Positions 392-516 are regulatory domain; sequence YLKFFSVQSI…NKKLKNLKKY (125 aa).

It belongs to the alpha-IPM synthase/homocitrate synthase family. LeuA type 1 subfamily. As to quaternary structure, homodimer. It depends on Mn(2+) as a cofactor.

Its subcellular location is the cytoplasm. The catalysed reaction is 3-methyl-2-oxobutanoate + acetyl-CoA + H2O = (2S)-2-isopropylmalate + CoA + H(+). Its pathway is amino-acid biosynthesis; L-leucine biosynthesis; L-leucine from 3-methyl-2-oxobutanoate: step 1/4. In terms of biological role, catalyzes the condensation of the acetyl group of acetyl-CoA with 3-methyl-2-oxobutanoate (2-ketoisovalerate) to form 3-carboxy-3-hydroxy-4-methylpentanoate (2-isopropylmalate). The protein is 2-isopropylmalate synthase of Buchnera aphidicola subsp. Diuraphis noxia.